Reading from the N-terminus, the 533-residue chain is Tyrosine protein-kinase src-1 (533 aa).

Gly-2 carries N-myristoyl glycine lipidation. Positions 71-132 (QERETLVALY…PRNFVAKQQT (62 aa)) constitute an SH3 domain. Residues 138–237 (WYAGKIPRNR…GLCCQLTFPA (100 aa)) enclose the SH2 domain. Residues 262–521 (LHLKRKLGDG…TLYHFFDDYF (260 aa)) enclose the Protein kinase domain. ATP is bound by residues 268-276 (LGDGNFGEV) and Lys-290. Asp-381 functions as the Proton acceptor in the catalytic mechanism. Tyr-416 bears the Phosphotyrosine; by autocatalysis mark. Tyr-528 carries the phosphotyrosine modification.

Belongs to the protein kinase superfamily. Tyr protein kinase family. SRC subfamily. As to quaternary structure, interacts (via SH2 domain and SH3 domain) with unc-5 (via cytoplasmic domain); the interaction requires kinase activity. Interacts (when activated and phosphorylated at 'Tyr-416') with ina-1 (via cytoplasmic domain) and with ced-2 (via SH2 domain). The cofactor is Mg(2+). Mn(2+) serves as cofactor. In terms of processing, may be phosphorylated on Tyr-528 by csk-1. As to expression, expressed in some neurons (ASE, ADF, AVA, AUA, RMDV and BAG) in the head region, anchor cell, vulva, cells around anus, body wall muscle, pharyngeal muscles in procorpus and metacorpus. Expressed in gonadal distal tip cells.

The protein localises to the cell membrane. It localises to the cell projection. Its subcellular location is the phagocytic cup. It carries out the reaction L-tyrosyl-[protein] + ATP = O-phospho-L-tyrosyl-[protein] + ADP + H(+). May be activated by autophosphorylation. May be inhibited by csk-1-mediated phosphorylation. Its function is as follows. Non-receptor tyrosine-protein kinase which plays a role in endoderm development by controlling spindle orientation in EMS blastomere, probably downstream of receptor mes-1. Also involved in embryonic body morphogenesis, especially in the formation of the pharynx and the intestine. May be dispensable for pharyngeal muscle organization in the adult. Probably phosphorylates netrin receptor unc-5, to regulate distal tip cell (DTC) migration during gonad development and in axon repulsion. Plays a role in the migration of the QR neuroblast, a precursor of the AVM neuron, and in the migration of the axon cone of AVM, ALM, CAN and PVM neurons. May act downstream of migratory protein mig-13 to control AVM neuron migration. Probably downstream of integrin ina-1/pat-3, plays a role in the clearance of apoptotic cells during mid-embryogenesis. Phosphorylates ced-1 at 'Tyr-1019' which promotes ced-1 proteasomal degradation, maintaining appropriate ced-1 levels for apoptotic cell clearance. This is Tyrosine protein-kinase src-1 from Caenorhabditis elegans.